Here is a 161-residue protein sequence, read N- to C-terminus: Cyclic pyranopterin monophosphate synthase (161 aa).

Residues 73-75 (LCH) and 110-111 (ME) contribute to the substrate site. The active site involves D125.

It belongs to the MoaC family. As to quaternary structure, homohexamer; trimer of dimers.

The catalysed reaction is (8S)-3',8-cyclo-7,8-dihydroguanosine 5'-triphosphate = cyclic pyranopterin phosphate + diphosphate. It functions in the pathway cofactor biosynthesis; molybdopterin biosynthesis. In terms of biological role, catalyzes the conversion of (8S)-3',8-cyclo-7,8-dihydroguanosine 5'-triphosphate to cyclic pyranopterin monophosphate (cPMP). The polypeptide is Cyclic pyranopterin monophosphate synthase (Pseudomonas syringae pv. syringae (strain B728a)).